The following is a 536-amino-acid chain: Apoptosis inhibitor 5 homolog (536 aa).

The disordered stretch occupies residues 462-536 (ITFGEKAAAN…GYRNRRFNKY (75 aa)). The span at 472–487 (GKDKDQEPEKKSRPSN) shows a compositional bias: basic and acidic residues. Positions 498–507 (KYSNKVNQSY) are enriched in polar residues. Residues 516 to 528 (RGGGGGGGSGGGY) are compositionally biased toward gly residues.

This sequence belongs to the API5 family.

Its subcellular location is the nucleus. Antiapoptotic factor. Also known to efficiently suppress E2F1-induced apoptosis. The sequence is that of Apoptosis inhibitor 5 homolog from Drosophila melanogaster (Fruit fly).